We begin with the raw amino-acid sequence, 378 residues long: RNA polymerase sigma factor SigA (378 aa).

A disordered region spans residues 1-29 (MKNKTEVKNGGEKKNSKKVSKEESAKEKN). Positions 145-215 (LAEANLRLVV…TRAIADQART (71 aa)) are sigma-70 factor domain-2. The short motif at 169–172 (DLIQ) is the Interaction with polymerase core subunit RpoC element. The segment at 224 to 300 (ETINKLIRVS…DDEAPAPADA (77 aa)) is sigma-70 factor domain-3. Residues 313–366 (ILNTLTPREEKVLRLRFGLDDGRARTLEEVGKEFNVTRERIRQIEAKALRKLRH) form a sigma-70 factor domain-4 region. Residues 339 to 358 (LEEVGKEFNVTRERIRQIEA) constitute a DNA-binding region (H-T-H motif).

It belongs to the sigma-70 factor family. RpoD/SigA subfamily. As to quaternary structure, interacts transiently with the RNA polymerase catalytic core.

It localises to the cytoplasm. Sigma factors are initiation factors that promote the attachment of RNA polymerase to specific initiation sites and are then released. This sigma factor is the primary sigma factor during exponential growth. The chain is RNA polymerase sigma factor SigA from Clostridium acetobutylicum (strain ATCC 824 / DSM 792 / JCM 1419 / IAM 19013 / LMG 5710 / NBRC 13948 / NRRL B-527 / VKM B-1787 / 2291 / W).